The following is a 254-amino-acid chain: C-X-C motif chemokine 16 (254 aa).

The signal sequence occupies residues 1–29 (MGRDLRPGSRVLLLLLLLLLVYLTQPGNG). Over 30–205 (NEGSVTGSCY…AGPTARTSAT (176 aa)) the chain is Extracellular. The interval 32–107 (GSVTGSCYCG…DLKECGHAYS (76 aa)) is chemokine. Cystine bridges form between Cys38–Cys68 and Cys40–Cys82. The interval 146 to 165 (QSTQRPTLPVGSLSSDKELT) is disordered. The N-linked (GlcNAc...) asparagine glycan is linked to Asn168. The interval 178-200 (SLAAGPEAGENQKQPEKNAGPTA) is disordered. Residues 206–226 (VPVLCLLAIIFILTAALSYVL) form a helical membrane-spanning segment. Residues 227 to 254 (CKRRRGQSPQSSPDLPVHYIPVAPDSNT) lie on the Cytoplasmic side of the membrane. The interval 231–254 (RGQSPQSSPDLPVHYIPVAPDSNT) is disordered.

The protein belongs to the intercrine alpha (chemokine CxC) family. In terms of processing, glycosylated. In terms of tissue distribution, expressed in T-cell areas. Expressed in spleen, lymph nodes, lung, kidney, small intestine and thymus. Weak expression in heart and liver and no expression in brain and bone marrow.

It is found in the cell membrane. The protein localises to the secreted. Functionally, acts as a scavenger receptor on macrophages, which specifically binds to OxLDL (oxidized low density lipoprotein), suggesting that it may be involved in pathophysiology such as atherogenesis. Induces a strong chemotactic response. Induces calcium mobilization. Binds to CXCR6/Bonzo. The protein is C-X-C motif chemokine 16 (CXCL16) of Homo sapiens (Human).